We begin with the raw amino-acid sequence, 309 residues long: Tagatose-6-phosphate kinase (309 aa).

The protein belongs to the carbohydrate kinase PfkB family. LacC subfamily.

It carries out the reaction D-tagatofuranose 6-phosphate + ATP = D-tagatofuranose 1,6-bisphosphate + ADP + H(+). The protein operates within carbohydrate metabolism; D-tagatose 6-phosphate degradation; D-glyceraldehyde 3-phosphate and glycerone phosphate from D-tagatose 6-phosphate: step 1/2. The sequence is that of Tagatose-6-phosphate kinase from Streptococcus pneumoniae (strain ATCC 700669 / Spain 23F-1).